A 471-amino-acid polypeptide reads, in one-letter code: MTDLPDSTRWRLWIVAFGFFMQSLDTTIVNTALPSMAQSLGESPLHMHMVIVSYVLTVAVMLPASGWLADKVGVRNIFFTAIVLFTLGSLFCALSGTLNELLLARALQGVGGAMMVPVGRLTVMKIVPREQYMAAMTFVTLPGQVGPLLGPALGGLLVEYASWHWIFLINIPVGIIGAIATLMLMPNYTMQTRRFDLSGFLLLAVGMAVLTLALDGSKGTGLSPLAIAGLVAVGVVALVLYLLHAQNNNRALFSLKLFRTRTFSLGLAGSFAGRIGSGMLPFMTPVFLQIGLGFSPFHAGLMMIPMVLGSMGMKRIVVQVVNRFGYRRVLVATTLGLSLVTLLFMTTALLGWYYVLPFVLFLQGMVNSTRFSSMNTLTLKDLPDNLASSGNSLLSMIMQLSMSIGVTIAGLLLGLFGSQHVSVDSGTTQTVFMYTWLSMASIIALPAFIFARVPNDTHQNVAISRRKRSAQ.

At 1 to 11 (MTDLPDSTRWR) the chain is on the periplasmic side. Residues 12–32 (LWIVAFGFFMQSLDTTIVNTA) traverse the membrane as a helical segment. The Cytoplasmic portion of the chain corresponds to 33-48 (LPSMAQSLGESPLHMH). The helical transmembrane segment at 49–69 (MVIVSYVLTVAVMLPASGWLA) threads the bilayer. The Periplasmic segment spans residues 70–76 (DKVGVRN). The chain crosses the membrane as a helical span at residues 77–97 (IFFTAIVLFTLGSLFCALSGT). Over 98 to 101 (LNEL) the chain is Cytoplasmic. A helical transmembrane segment spans residues 102–124 (LLARALQGVGGAMMVPVGRLTVM). Over 125–137 (KIVPREQYMAAMT) the chain is Periplasmic. A helical transmembrane segment spans residues 138 to 158 (FVTLPGQVGPLLGPALGGLLV). The Cytoplasmic segment spans residues 159-164 (EYASWH). A helical transmembrane segment spans residues 165-185 (WIFLINIPVGIIGAIATLMLM). The Periplasmic portion of the chain corresponds to 186 to 196 (PNYTMQTRRFD). A helical transmembrane segment spans residues 197 to 217 (LSGFLLLAVGMAVLTLALDGS). The Cytoplasmic segment spans residues 218 to 224 (KGTGLSP). The helical transmembrane segment at 225–245 (LAIAGLVAVGVVALVLYLLHA) threads the bilayer. Topologically, residues 246 to 262 (QNNNRALFSLKLFRTRT) are periplasmic. A helical membrane pass occupies residues 263–283 (FSLGLAGSFAGRIGSGMLPFM). Residues 284–285 (TP) are Cytoplasmic-facing. A helical transmembrane segment spans residues 286–306 (VFLQIGLGFSPFHAGLMMIPM). The Periplasmic segment spans residues 307 to 341 (VLGSMGMKRIVVQVVNRFGYRRVLVATTLGLSLVT). A helical membrane pass occupies residues 342-362 (LLFMTTALLGWYYVLPFVLFL). At 363-395 (QGMVNSTRFSSMNTLTLKDLPDNLASSGNSLLS) the chain is on the cytoplasmic side. A helical membrane pass occupies residues 396–416 (MIMQLSMSIGVTIAGLLLGLF). Over 417–430 (GSQHVSVDSGTTQT) the chain is Periplasmic. Residues 431-451 (VFMYTWLSMASIIALPAFIFA) form a helical membrane-spanning segment. Residues 452 to 471 (RVPNDTHQNVAISRRKRSAQ) lie on the Cytoplasmic side of the membrane.

This sequence belongs to the major facilitator superfamily. TCR/Tet family.

It is found in the cell inner membrane. The chain is Putative multidrug resistance protein MdtD from Escherichia coli O6:K15:H31 (strain 536 / UPEC).